A 147-amino-acid chain; its full sequence is Large ribosomal subunit protein uL16 (147 aa).

Belongs to the universal ribosomal protein uL16 family. In terms of assembly, part of the 50S ribosomal subunit.

In terms of biological role, binds 23S rRNA and is also seen to make contacts with the A and possibly P site tRNAs. This chain is Large ribosomal subunit protein uL16, found in Caldicellulosiruptor saccharolyticus (strain ATCC 43494 / DSM 8903 / Tp8T 6331).